Reading from the N-terminus, the 126-residue chain is uncharacterized protein (126 aa).

Residues 1 to 9 (MCTYIITQS) lie on the Extracellular side of the membrane. The chain crosses the membrane as a helical span at residues 10 to 30 (FFFLPCLSFLFFKLVGFFDSV). Residues 31 to 73 (FTAGKSLRIMFELPIFDKLTSCFAAIDCSATSLDIPFAEEELF) are Cytoplasmic-facing. The chain crosses the membrane as a helical span at residues 74 to 94 (LMLVSEPVLIPFLFVFEFMLI). At 95–126 (CKPCGSRSRFGFPVKNVSDFEETLEFDPTLLV) the chain is on the extracellular side.

It is found in the membrane. This is an uncharacterized protein from Saccharomyces cerevisiae (strain ATCC 204508 / S288c) (Baker's yeast).